Consider the following 126-residue polypeptide: Holo-[acyl-carrier-protein] synthase (126 aa).

Mg(2+) is bound by residues D8 and E57.

Belongs to the P-Pant transferase superfamily. AcpS family. It depends on Mg(2+) as a cofactor.

The protein localises to the cytoplasm. It carries out the reaction apo-[ACP] + CoA = holo-[ACP] + adenosine 3',5'-bisphosphate + H(+). Functionally, transfers the 4'-phosphopantetheine moiety from coenzyme A to a Ser of acyl-carrier-protein. This chain is Holo-[acyl-carrier-protein] synthase, found in Halorhodospira halophila (strain DSM 244 / SL1) (Ectothiorhodospira halophila (strain DSM 244 / SL1)).